A 279-amino-acid polypeptide reads, in one-letter code: Tryptophan synthase alpha chain (279 aa).

Active-site proton acceptor residues include glutamate 50 and aspartate 61.

It belongs to the TrpA family. As to quaternary structure, tetramer of two alpha and two beta chains.

The catalysed reaction is (1S,2R)-1-C-(indol-3-yl)glycerol 3-phosphate + L-serine = D-glyceraldehyde 3-phosphate + L-tryptophan + H2O. The protein operates within amino-acid biosynthesis; L-tryptophan biosynthesis; L-tryptophan from chorismate: step 5/5. In terms of biological role, the alpha subunit is responsible for the aldol cleavage of indoleglycerol phosphate to indole and glyceraldehyde 3-phosphate. The protein is Tryptophan synthase alpha chain of Sinorhizobium medicae (strain WSM419) (Ensifer medicae).